A 425-amino-acid polypeptide reads, in one-letter code: Serine hydroxymethyltransferase (425 aa).

(6S)-5,6,7,8-tetrahydrofolate is bound by residues Leu-120 and 124–126 (GHL). The residue at position 229 (Lys-229) is an N6-(pyridoxal phosphate)lysine. 353–355 (SPF) serves as a coordination point for (6S)-5,6,7,8-tetrahydrofolate.

It belongs to the SHMT family. Homodimer. Pyridoxal 5'-phosphate is required as a cofactor.

The protein resides in the cytoplasm. The enzyme catalyses (6R)-5,10-methylene-5,6,7,8-tetrahydrofolate + glycine + H2O = (6S)-5,6,7,8-tetrahydrofolate + L-serine. It participates in one-carbon metabolism; tetrahydrofolate interconversion. It functions in the pathway amino-acid biosynthesis; glycine biosynthesis; glycine from L-serine: step 1/1. In terms of biological role, catalyzes the reversible interconversion of serine and glycine with tetrahydrofolate (THF) serving as the one-carbon carrier. This reaction serves as the major source of one-carbon groups required for the biosynthesis of purines, thymidylate, methionine, and other important biomolecules. Also exhibits THF-independent aldolase activity toward beta-hydroxyamino acids, producing glycine and aldehydes, via a retro-aldol mechanism. The sequence is that of Serine hydroxymethyltransferase from Thermosynechococcus vestitus (strain NIES-2133 / IAM M-273 / BP-1).